A 75-amino-acid chain; its full sequence is Exodeoxyribonuclease 7 small subunit (75 aa).

The protein belongs to the XseB family. Heterooligomer composed of large and small subunits.

It is found in the cytoplasm. The catalysed reaction is Exonucleolytic cleavage in either 5'- to 3'- or 3'- to 5'-direction to yield nucleoside 5'-phosphates.. Its function is as follows. Bidirectionally degrades single-stranded DNA into large acid-insoluble oligonucleotides, which are then degraded further into small acid-soluble oligonucleotides. This is Exodeoxyribonuclease 7 small subunit from Clostridium perfringens (strain ATCC 13124 / DSM 756 / JCM 1290 / NCIMB 6125 / NCTC 8237 / Type A).